Here is a 495-residue protein sequence, read N- to C-terminus: Internal alternative NAD(P)H-ubiquinone oxidoreductase A1, mitochondrial (495 aa).

The transit peptide at 1-41 (MPWFKNLIKISKTITNQSSSYKSITPLASPLLTQFLQFTKQ) directs the protein to the mitochondrion. 61–91 (RIVVLGSGWAGCRLMKDIDTNIYDVVCVSPR) provides a ligand contact to FAD. An NAD(+)-binding site is contributed by 228–264 (LHCVVVGGGPTGVEFSGELSDFILKDVHQRYAHVKDY). Positions 486–495 (LVFGRDISRI) match the Microbody targeting signal motif.

Belongs to the NADH dehydrogenase family. The cofactor is FAD.

The protein localises to the mitochondrion inner membrane. It localises to the peroxisome. It carries out the reaction a quinone + NADH + H(+) = a quinol + NAD(+). The enzyme catalyses a ubiquinone + NADH + H(+) = a ubiquinol + NAD(+). Alternative NADH-ubiquinone oxidoreductase which catalyzes the oxidation of mitochondrial NADH does not translocate protons across the inner mitochondrial membrane. This Solanum tuberosum (Potato) protein is Internal alternative NAD(P)H-ubiquinone oxidoreductase A1, mitochondrial (NDA1).